The chain runs to 289 residues: HTH-type transcriptional activator AmpR (289 aa).

An HTH lysR-type domain is found at 6-63; it reads LPLNALRVFEVAMRQGSFTKAAIELRVTQAAVSHQVARLEDLLGTALFLRTSQGLIPT. The H-T-H motif DNA-binding region spans 23–42; that stretch reads FTKAAIELRVTQAAVSHQVA.

This sequence belongs to the LysR transcriptional regulatory family.

It localises to the cytoplasm. In terms of biological role, this protein is a positive regulator of gene expression of cephalosporinase (AmpC). The chain is HTH-type transcriptional activator AmpR (ampR) from Rhodobacter capsulatus (Rhodopseudomonas capsulata).